A 349-amino-acid chain; its full sequence is Bifunctional protein FolKE (349 aa).

The tract at residues Met1–Asp226 is 2-amino-4-hydroxy-6-hydroxymethyldihydropteridine pyrophosphokinase. Residues Asp226–Leu349 form a GTP cyclohydrolase 1 region.

In the N-terminal section; belongs to the HPPK family. This sequence in the C-terminal section; belongs to the GTP cyclohydrolase I family. As to quaternary structure, homomer.

It carries out the reaction 6-hydroxymethyl-7,8-dihydropterin + ATP = (7,8-dihydropterin-6-yl)methyl diphosphate + AMP + H(+). The enzyme catalyses GTP + H2O = 7,8-dihydroneopterin 3'-triphosphate + formate + H(+). The protein operates within cofactor biosynthesis; 7,8-dihydroneopterin triphosphate biosynthesis; 7,8-dihydroneopterin triphosphate from GTP: step 1/1. It participates in cofactor biosynthesis; tetrahydrofolate biosynthesis; 2-amino-4-hydroxy-6-hydroxymethyl-7,8-dihydropteridine diphosphate from 7,8-dihydroneopterin triphosphate: step 4/4. This is Bifunctional protein FolKE (folKE) from Lactococcus lactis subsp. cremoris (strain MG1363).